The chain runs to 455 residues: MKLLVVGASYRTAPVAALERLTVAPADLSRVLTRLVAQPYVSEAVLVSTCNRVEVYAVVSGFHGGLGDICAVLAESTGCQPAALADHLYVHFDAAAVNHVFRVAVGLDSMVVGEAQILGQLRDAYHWASEAETVGRLLHELMQQALRVGKRAHSETGIDRAGQSVVTAALGLATELLHSDLACRPALVVGAGAMGSLGVATLARLGAGPVSVTNRGVDRAIRLAESYGATAVPIADLTATLSTVDIVVAATAAPEAVLTRAVVTQALAGRNPSRGPLVLLDLAVPRDVEPGVADLPGVQVIDIDRMAALVADGPVAADAAAVEQIVAAEVDTFLTWLRGADVAPTVAALRGRADDVVAAELGRLVHRRPDLTDEQRADVARTVHRVVQRLLHQPTVRVRQLAAEPGGDQYTALLRELFDLEVPQTSAVGTVPDVVVPDVDPQLGGDAEAPPTGGE.

Substrate contacts are provided by residues 49–52 (TCNR), serine 109, 114–116 (EAQ), and glutamine 120. The Nucleophile role is filled by cysteine 50. 190–195 (GAGAMG) provides a ligand contact to NADP(+).

Belongs to the glutamyl-tRNA reductase family. In terms of assembly, homodimer.

It catalyses the reaction (S)-4-amino-5-oxopentanoate + tRNA(Glu) + NADP(+) = L-glutamyl-tRNA(Glu) + NADPH + H(+). The protein operates within porphyrin-containing compound metabolism; protoporphyrin-IX biosynthesis; 5-aminolevulinate from L-glutamyl-tRNA(Glu): step 1/2. In terms of biological role, catalyzes the NADPH-dependent reduction of glutamyl-tRNA(Glu) to glutamate 1-semialdehyde (GSA). This chain is Glutamyl-tRNA reductase, found in Salinispora tropica (strain ATCC BAA-916 / DSM 44818 / JCM 13857 / NBRC 105044 / CNB-440).